Here is a 418-residue protein sequence, read N- to C-terminus: Voltage-gated ClC-type chloride channel ClcB (418 aa).

Residues 1–4 (MFRR) lie on the Cytoplasmic side of the membrane. The chain crosses the membrane as a helical span at residues 5-25 (LLIATVVGILAVFAVAGFRHA). Over 26–53 (MLLLEWLFLNNDSGSLVNAATNLSSWRR) the chain is Periplasmic. A helical membrane pass occupies residues 54-74 (LLTPALGGLAAGLLLMGWQKF). At 75-145 (TQQRPHAPTD…QRFTPRQEWK (71 aa)) the chain is on the cytoplasmic side. Residues 146-166 (LWIACGAAAGMAAAYRAPLAG) form a helical membrane-spanning segment. The Periplasmic segment spans residues 167-172 (SLFIAE). The helical transmembrane segment at 173–193 (VLFGTMMLASLGPVIISAIVA) threads the bilayer. Residues 194–221 (WLVSNLINHSDALLYNVQLSVTVQARDY) are Cytoplasmic-facing. Residues 222 to 242 (ALIISTGVLAGLCGPLLLTLM) traverse the membrane as a helical segment. The Periplasmic segment spans residues 243-257 (NACHRGFVSLKLAPP). A helical membrane pass occupies residues 258 to 278 (WQLALGGLIVGLLSLFTPAVW). Over 279-290 (GNGYSTVQSFLT) the chain is Cytoplasmic. Residues 291 to 311 (APPLLMIIAGIFLCKLCAVLA) form a helical membrane-spanning segment. Topologically, residues 312-315 (SSGS) are periplasmic. The chain crosses the membrane as a helical span at residues 316 to 336 (GAPGGVFTPTLFIGLAIGMLY). Residues 337-351 (GRSLGLWFPDGEEIT) are Cytoplasmic-facing. A helical transmembrane segment spans residues 352–372 (LLLGLTGMATLLAATTHAPIM). The Periplasmic segment spans residues 373–379 (STLMICE). A helical membrane pass occupies residues 380-400 (MTGEYQLLPGLLIACVIASVI). The Cytoplasmic portion of the chain corresponds to 401–418 (SRTLHRDSIYRQHTAQHS).

The protein belongs to the chloride channel (TC 2.A.49) family. ClcB subfamily.

Its subcellular location is the cell inner membrane. Functionally, probably acts as an electrical shunt for an outwardly-directed proton pump that is linked to amino acid decarboxylation, as part of the extreme acid resistance (XAR) response. The polypeptide is Voltage-gated ClC-type chloride channel ClcB (clcB) (Shigella flexneri).